Here is a 112-residue protein sequence, read N- to C-terminus: MFSKSGMSDLMKHAQRMQEQMQQMQGEIAKLEVNGESGAGLVKVTINGVYHCRRVEIDSSLLQDDKDMLEDLITAAFNDAVRRITEIKKDKMTSLSSSLQMPLGFNWNMPFL.

It belongs to the YbaB/EbfC family. Homodimer.

The protein resides in the cytoplasm. It is found in the nucleoid. In terms of biological role, binds to DNA and alters its conformation. May be involved in regulation of gene expression, nucleoid organization and DNA protection. The chain is Nucleoid-associated protein BCI_0116 from Baumannia cicadellinicola subsp. Homalodisca coagulata.